A 147-amino-acid chain; its full sequence is Large ribosomal subunit protein uL15 (147 aa).

The tract at residues 1–58 (MKLHELKPAQGSTKAPKRLGRGIGSGTGKTSGKGHKGQKARAGGGVRPGFEGGQQPLA) is disordered. Composition is skewed to gly residues over residues 21–31 (RGIGSGTGKTS) and 42–52 (AGGGVRPGFEG).

It belongs to the universal ribosomal protein uL15 family. As to quaternary structure, part of the 50S ribosomal subunit.

Its function is as follows. Binds to the 23S rRNA. The protein is Large ribosomal subunit protein uL15 of Desulfitobacterium hafniense (strain Y51).